The primary structure comprises 512 residues: MEISYGRALWRNFLGQSPDWYKLTLLAFLIINPLVFIFQPFMAGWLLVAEFIFTLAMALKCYPLLPGGLLAIEAVVIGMTSAERVKDELATNLEVLLLLMFMVAGIYFMKQLLLFIFTRLLLSIRSKTVLSLSFCLAAAFLSAFLDALTVVAVVISVAIGFYGIYHRVASSSSDNDLQDDSQLDVNKRDVLEQFRAFLRSLMMHAGVGTALGGVMTMVGEPQNLIIAKAAGWNFTEFFLRVAPVSVPVFICGMLTCFLLERTKTFGYGVQLPGAVRDVLHEFDLKSRSQRTRQEKLALIAQGIIGAWLIFALAFHLAEVGLIGLSVIILATSFTGVTDEHAIGKAFTEALPFTALLAVFFAIVAVIIDQQLFTPIIHFVLQASPDSQLSLFYLFNGLLSSISDNVFVGSVYINEAKTALESGAIGINQFELLAVAINTGTNLPSVATPNGQAAFLFLLTSALAPLIRLSYGRMVWMALPYTVVLTLVGLLCVKFTLIPYTQWLMQIGILAAH.

Helical transmembrane passes span 28–48 (FLII…WLLV), 52–72 (IFTL…LLAI), 97–117 (LLLM…LFIF), 144–164 (FLDA…FYGI), 201–221 (LMMH…VGEP), 237–257 (FFLR…LTCF), 296–330 (LALI…IILA), 347–367 (TEAL…AVII), 390–410 (LFYL…VGSV), 446–466 (ATPN…APLI), and 474–494 (VWMA…CVKF).

The protein belongs to the NhaB Na(+)/H(+) (TC 2.A.34) antiporter family.

The protein localises to the cell inner membrane. The enzyme catalyses 2 Na(+)(in) + 3 H(+)(out) = 2 Na(+)(out) + 3 H(+)(in). Its function is as follows. Na(+)/H(+) antiporter that extrudes sodium in exchange for external protons. The chain is Na(+)/H(+) antiporter NhaB from Enterobacter sp. (strain 638).